A 251-amino-acid chain; its full sequence is MSDSKLAGQFFDAAIGLLTRVRDEESDSIAAAGAAVADTVASGGRLFAFGAGHSSLAAQDVVYRAGGLALMNLLTVPGAVGVDVMPATLGSALERVDGLASAVLDSSPATAGDLLVIVSLSGRNALPVEMAQNARALGLKVIGLTSVAYAENTRSRHASGGFLRDHCDIVLDSKIAIGDAELTAPGVEAPFAPASTVVTSAIMQAMLAAAVEQLVARGIEPPMLRSGNVDGGHEWNGRVMTEYRDRIFYRH.

The SIS domain occupies 36 to 221; it reads VADTVASGGR…EQLVARGIEP (186 aa).

It belongs to the UPF0309 family.

The chain is UPF0309 protein SGR_3073 from Streptomyces griseus subsp. griseus (strain JCM 4626 / CBS 651.72 / NBRC 13350 / KCC S-0626 / ISP 5235).